We begin with the raw amino-acid sequence, 211 residues long: Uridine kinase (211 aa).

12 to 19 (GGSGSGKT) serves as a coordination point for ATP.

This sequence belongs to the uridine kinase family.

Its subcellular location is the cytoplasm. The catalysed reaction is uridine + ATP = UMP + ADP + H(+). It catalyses the reaction cytidine + ATP = CMP + ADP + H(+). Its pathway is pyrimidine metabolism; CTP biosynthesis via salvage pathway; CTP from cytidine: step 1/3. It functions in the pathway pyrimidine metabolism; UMP biosynthesis via salvage pathway; UMP from uridine: step 1/1. This chain is Uridine kinase, found in Bacillus licheniformis (strain ATCC 14580 / DSM 13 / JCM 2505 / CCUG 7422 / NBRC 12200 / NCIMB 9375 / NCTC 10341 / NRRL NRS-1264 / Gibson 46).